We begin with the raw amino-acid sequence, 176 residues long: Ferritin, middle subunit (176 aa).

The 150-residue stretch at 7–156 (QNYHSDCEAA…DFITNLKRLG (150 aa)) folds into the Ferritin-like diiron domain. Residues glutamate 24, glutamate 59, histidine 62, glutamate 104, glutamine 138, and aspartate 141 each coordinate Fe cation.

This sequence belongs to the ferritin family. As to quaternary structure, oligomer of 24 subunits. The functional molecule is roughly spherical and contains a central cavity into which the polymeric mineral iron core is deposited.

It carries out the reaction 4 Fe(2+) + O2 + 4 H(+) = 4 Fe(3+) + 2 H2O. Functionally, stores iron in a soluble, non-toxic, readily available form. Important for iron homeostasis. Has ferroxidase activity. Iron is taken up in the ferrous form and deposited as ferric hydroxides after oxidation. The sequence is that of Ferritin, middle subunit from Aquarana catesbeiana (American bullfrog).